A 465-amino-acid polypeptide reads, in one-letter code: Iron-sulfur cluster assembly SufBD family protein SERP0500 (465 aa).

The protein belongs to the iron-sulfur cluster assembly SufBD family.

The polypeptide is Iron-sulfur cluster assembly SufBD family protein SERP0500 (Staphylococcus epidermidis (strain ATCC 35984 / DSM 28319 / BCRC 17069 / CCUG 31568 / BM 3577 / RP62A)).